We begin with the raw amino-acid sequence, 72 residues long: Large ribosomal subunit protein bL28 (72 aa).

This sequence belongs to the bacterial ribosomal protein bL28 family.

The protein is Large ribosomal subunit protein bL28 of Chlorobaculum parvum (strain DSM 263 / NCIMB 8327) (Chlorobium vibrioforme subsp. thiosulfatophilum).